Consider the following 140-residue polypeptide: Nucleoside diphosphate kinase (140 aa).

The ATP site is built by Lys-11, Phe-59, Arg-87, Thr-93, Arg-104, and Asn-114. His-117 serves as the catalytic Pros-phosphohistidine intermediate.

Belongs to the NDK family. Homotetramer. The cofactor is Mg(2+).

Its subcellular location is the cytoplasm. It catalyses the reaction a 2'-deoxyribonucleoside 5'-diphosphate + ATP = a 2'-deoxyribonucleoside 5'-triphosphate + ADP. It carries out the reaction a ribonucleoside 5'-diphosphate + ATP = a ribonucleoside 5'-triphosphate + ADP. Functionally, major role in the synthesis of nucleoside triphosphates other than ATP. The ATP gamma phosphate is transferred to the NDP beta phosphate via a ping-pong mechanism, using a phosphorylated active-site intermediate. This chain is Nucleoside diphosphate kinase, found in Bradyrhizobium diazoefficiens (strain JCM 10833 / BCRC 13528 / IAM 13628 / NBRC 14792 / USDA 110).